Consider the following 241-residue polypeptide: Uridylate kinase (241 aa).

15–18 (KLSG) lines the ATP pocket. The interval 23–28 (GTEGFG) is involved in allosteric activation by GTP. Gly-57 serves as a coordination point for UMP. The ATP site is built by Gly-58 and Arg-62. UMP contacts are provided by residues Asp-77 and 138 to 145 (TGNPFFTT). The ATP site is built by Thr-165, Phe-171, and Asp-174.

This sequence belongs to the UMP kinase family. Homohexamer.

It is found in the cytoplasm. The catalysed reaction is UMP + ATP = UDP + ADP. The protein operates within pyrimidine metabolism; CTP biosynthesis via de novo pathway; UDP from UMP (UMPK route): step 1/1. Allosterically activated by GTP. Inhibited by UTP. Its function is as follows. Catalyzes the reversible phosphorylation of UMP to UDP. This chain is Uridylate kinase, found in Salmonella choleraesuis (strain SC-B67).